Consider the following 123-residue polypeptide: Methylmalonyl-CoA carboxyltransferase 1.3S subunit (123 aa).

The Biotinyl-binding domain occupies 46 to 123; it reads GAGAGKAGEG…QGGQGLIKIG (78 aa). Residue lysine 89 is modified to N6-biotinyllysine.

Transcarboxylase is composed of three subunits: 1.3S, 5S, and 12S. The core of the enzyme is composed of six 12S subunits. On each side of the core there are three pairs of 5S subunits. Each 5S dimer is attached to the core by two 1.3S subunits. Thus the total number of chains is 30 (6 + 12 + 12).

It catalyses the reaction (S)-methylmalonyl-CoA + pyruvate = propanoyl-CoA + oxaloacetate. Functionally, the biotinyl 1.3S subunit serves as a carboxyl carrier between the substrate-binding sites on the 12S and 5S subunits. The sequence is that of Methylmalonyl-CoA carboxyltransferase 1.3S subunit from Propionibacterium freudenreichii subsp. shermanii.